Here is a 382-residue protein sequence, read N- to C-terminus: Lipid-A-disaccharide synthase (382 aa).

Belongs to the LpxB family.

The catalysed reaction is 2-N,3-O-bis[(3R)-3-hydroxytetradecanoyl]-alpha-D-glucosaminyl 1-phosphate + UDP-2-N,3-O-bis[(3R)-3-hydroxytetradecanoyl]-alpha-D-glucosamine = lipid A disaccharide (E. coli) + UDP + H(+). It carries out the reaction a lipid X + a UDP-2-N,3-O-bis[(3R)-3-hydroxyacyl]-alpha-D-glucosamine = a lipid A disaccharide + UDP + H(+). It functions in the pathway glycolipid biosynthesis; lipid IV(A) biosynthesis; lipid IV(A) from (3R)-3-hydroxytetradecanoyl-[acyl-carrier-protein] and UDP-N-acetyl-alpha-D-glucosamine: step 5/6. Functionally, condensation of UDP-2,3-diacylglucosamine and 2,3-diacylglucosamine-1-phosphate to form lipid A disaccharide, a precursor of lipid A, a phosphorylated glycolipid that anchors the lipopolysaccharide to the outer membrane of the cell. The sequence is that of Lipid-A-disaccharide synthase from Citrobacter koseri (strain ATCC BAA-895 / CDC 4225-83 / SGSC4696).